We begin with the raw amino-acid sequence, 208 residues long: ATP phosphoribosyltransferase (208 aa).

It belongs to the ATP phosphoribosyltransferase family. Short subfamily. Heteromultimer composed of HisG and HisZ subunits.

Its subcellular location is the cytoplasm. The enzyme catalyses 1-(5-phospho-beta-D-ribosyl)-ATP + diphosphate = 5-phospho-alpha-D-ribose 1-diphosphate + ATP. It participates in amino-acid biosynthesis; L-histidine biosynthesis; L-histidine from 5-phospho-alpha-D-ribose 1-diphosphate: step 1/9. Catalyzes the condensation of ATP and 5-phosphoribose 1-diphosphate to form N'-(5'-phosphoribosyl)-ATP (PR-ATP). Has a crucial role in the pathway because the rate of histidine biosynthesis seems to be controlled primarily by regulation of HisG enzymatic activity. The protein is ATP phosphoribosyltransferase of Thermotoga petrophila (strain ATCC BAA-488 / DSM 13995 / JCM 10881 / RKU-1).